A 653-amino-acid polypeptide reads, in one-letter code: tRNA uridine 5-carboxymethylaminomethyl modification enzyme MnmG (653 aa).

FAD is bound by residues 18 to 23, Val130, and Thr195; that span reads GAGHAG. 287–301 is an NAD(+) binding site; the sequence is GPRYCPSIEDKVVRF. Gln384 contributes to the FAD binding site. Residues 624-653 are disordered; sequence SQTKSSASVDKRASSDNESSRPTSSASDSL. Residues 632–642 are compositionally biased toward basic and acidic residues; it reads VDKRASSDNES. The span at 643 to 653 shows a compositional bias: polar residues; it reads SRPTSSASDSL.

It belongs to the MnmG family. Homodimer. Heterotetramer of two MnmE and two MnmG subunits. FAD is required as a cofactor.

The protein resides in the cytoplasm. Functionally, NAD-binding protein involved in the addition of a carboxymethylaminomethyl (cmnm) group at the wobble position (U34) of certain tRNAs, forming tRNA-cmnm(5)s(2)U34. The sequence is that of tRNA uridine 5-carboxymethylaminomethyl modification enzyme MnmG from Rhodopirellula baltica (strain DSM 10527 / NCIMB 13988 / SH1).